Reading from the N-terminus, the 149-residue chain is MAKLLVLHGPNLNLLGTREPEVYGHTTLADIDQALAAQASTAGHAVESLQSNAEHVLVDRVQAARNDGTAFILINPAAFTHTSVALRDALAAVAVPFIEIHLSNPHTREPFRQHSYFSDKAVGVVCGFGADSYRYAMDAALARVRVAGA.

Y23 serves as the catalytic Proton acceptor. Substrate-binding residues include N75, H81, and D88. H101 acts as the Proton donor in catalysis. Residues 102 to 103 and R112 contribute to the substrate site; that span reads LS.

The protein belongs to the type-II 3-dehydroquinase family. Homododecamer.

The catalysed reaction is 3-dehydroquinate = 3-dehydroshikimate + H2O. It functions in the pathway metabolic intermediate biosynthesis; chorismate biosynthesis; chorismate from D-erythrose 4-phosphate and phosphoenolpyruvate: step 3/7. Catalyzes a trans-dehydration via an enolate intermediate. This is 3-dehydroquinate dehydratase from Stenotrophomonas maltophilia (strain R551-3).